A 197-amino-acid chain; its full sequence is Cyclin-dependent kinase inhibitor 1B (197 aa).

Positions 1-11 are enriched in polar residues; the sequence is MSNVRVSNGSP. Residues 1 to 34 are disordered; it reads MSNVRVSNGSPSLERMDARQAEHPKPSACRNLFG. Phosphoserine; by UHMK1 is present on Ser-10. A compositionally biased stretch (basic and acidic residues) spans 14–25; it reads ERMDARQAEHPK. Residues 51-91 are interaction with CDK2; it reads DMEEASQRKWNFDFQNHKPLEGRYEWQEVERGSLPEFYYRP. A Phosphotyrosine; by SRC modification is found at Tyr-74. The segment at 86 to 197 is disordered; it reads EFYYRPPRPP…PKKPGLRRQT (112 aa). Position 88 is a phosphotyrosine; by ABL, LYN, SRC and JAK2 (Tyr-88). Tyr-89 is subject to Phosphotyrosine. A compositionally biased stretch (polar residues) spans 104 to 113; that stretch reads QESQDVSGSR. Residues 153 to 169 carry the Nuclear localization signal motif; sequence KRPAAEDSSSQNKRANR. Phosphothreonine; by CaMK1 is present on Thr-170. Positions 175–186 are enriched in polar residues; sequence SDGSPNAGTVEQ. Thr-187 is modified (phosphothreonine; by PKB/AKT1, CDK1 and CDK2). Thr-197 is subject to Phosphothreonine; by CaMK1, PKB/AKT1, RPS6KA1, RPS6KA3 and PIM1.

Belongs to the CDI family. In terms of assembly, forms a ternary complex composed of CCNE1, CDK2 and CDKN1B. Interacts directly with CCNE1; the interaction is inhibited by CDK2-dependent phosphorylation on Thr-187. Interacts with COPS5, subunit of the COP9 signalosome complex; the interaction leads to CDKN1B degradation. Interacts with NUP50; the interaction leads to nuclear import and degradation of phosphorylated CDKN1B. Interacts with CCND1 and SNX6. Interacts (Thr-197-phosphorylated form) with 14-3-3 proteins, binds strongly YWHAQ, weakly YWHAE and YWHAH, but not YWHAB nor YWHAZ; the interaction with YWHAQ results in translocation to the cytoplasm. Interacts with AKT1 and LYN; the interactions lead to cytoplasmic mislocation, phosphorylation of CDKN1B and inhibition of cell cycle arrest. Forms a ternary complex with CCNA2 and CDK2; CDKN1B inhibits the kinase activity of CDK2 through conformational rearrangements. Interacts (unphosphorylated form) with CDK2. Forms a complex with CDK2 and SPDYA, but does not directly interact with SPDYA. Forms a ternary complex composed of cyclin D, CDK4 and CDKN1B. Interacts (phosphorylated on Tyr-88 and Tyr-89) with CDK4; the interaction is required for cyclin D and CDK4 complex assembly, induces nuclear translocation and activates the CDK4 kinase activity. Interacts with GRB2. Interacts with PIM1. Identified in a complex with SKP1, SKP2 and CKS1B. Interacts with UHMK1; the interaction leads to cytoplasmic mislocation, phosphorylation of CDKN1B and inhibition of cell cycle arrest. Also interacts with CDK1. Dephosphorylated on Thr-187 by PPM1H, leading to CDKN1B stability. In terms of processing, phosphorylated; phosphorylation occurs on serine, threonine and tyrosine residues. Phosphorylation on Ser-10 is the major site of phosphorylation in resting cells, takes place at the G(0)-G(1) phase and leads to protein stability. Phosphorylation on other sites is greatly enhanced by mitogens, growth factors, MYC and in certain cancer cell lines. The phosphorylated form found in the cytoplasm is inactivate. Phosphorylation on Thr-197 is required for interaction with 14-3-3 proteins. Phosphorylation on Thr-187, by CDK1 and CDK2 leads to protein ubiquitination and proteasomal degradation. Tyrosine phosphorylation promotes this process. Phosphorylation by PKB/AKT1 can be suppressed by LY294002, an inhibitor of the catalytic subunit of PI3K. Phosphorylation on Tyr-88 and Tyr-89 has no effect on binding CDK2, but is required for binding CDK4. Dephosphorylated on tyrosine residues by G-CSF. Dephosphorylated on Thr-187 by PPM1H, leading to CDKN1B stability. Post-translationally, ubiquitinated; in the cytoplasm by the KPC complex (composed of RNF123/KPC1 and UBAC1/KPC2) and, in the nucleus, by SCF(SKP2). The latter requires prior phosphorylation on Thr-187. Ubiquitinated; by a TRIM21-containing SCF(SKP2)-like complex; leads to its degradation. Subject to degradation in the lysosome. Interaction with SNX6 promotes lysosomal degradation.

Its subcellular location is the nucleus. The protein resides in the cytoplasm. It localises to the endosome. In terms of biological role, important regulator of cell cycle progression. Inhibits the kinase activity of CDK2 bound to cyclin A, but has little inhibitory activity on CDK2 bound to SPDYA. Involved in G1 arrest. Potent inhibitor of cyclin E- and cyclin A-CDK2 complexes. Forms a complex with cyclin type D-CDK4 complexes and is involved in the assembly, stability, and modulation of CCND1-CDK4 complex activation. Acts either as an inhibitor or an activator of cyclin type D-CDK4 complexes depending on its phosphorylation state and/or stoichometry. In Mus musculus (Mouse), this protein is Cyclin-dependent kinase inhibitor 1B (Cdkn1b).